The sequence spans 459 residues: ATP synthase subunit beta (459 aa).

Position 148–155 (148–155 (GGAGVGKT)) interacts with ATP.

This sequence belongs to the ATPase alpha/beta chains family. As to quaternary structure, F-type ATPases have 2 components, CF(1) - the catalytic core - and CF(0) - the membrane proton channel. CF(1) has five subunits: alpha(3), beta(3), gamma(1), delta(1), epsilon(1). CF(0) has three main subunits: a(1), b(2) and c(9-12). The alpha and beta chains form an alternating ring which encloses part of the gamma chain. CF(1) is attached to CF(0) by a central stalk formed by the gamma and epsilon chains, while a peripheral stalk is formed by the delta and b chains.

The protein resides in the cell inner membrane. The enzyme catalyses ATP + H2O + 4 H(+)(in) = ADP + phosphate + 5 H(+)(out). Produces ATP from ADP in the presence of a proton gradient across the membrane. The catalytic sites are hosted primarily by the beta subunits. This chain is ATP synthase subunit beta, found in Burkholderia mallei (strain NCTC 10229).